A 431-amino-acid chain; its full sequence is tRNA(Ile)-lysidine synthase (431 aa).

25–30 (SGGPDS) lines the ATP pocket.

It belongs to the tRNA(Ile)-lysidine synthase family.

The protein resides in the cytoplasm. It catalyses the reaction cytidine(34) in tRNA(Ile2) + L-lysine + ATP = lysidine(34) in tRNA(Ile2) + AMP + diphosphate + H(+). In terms of biological role, ligates lysine onto the cytidine present at position 34 of the AUA codon-specific tRNA(Ile) that contains the anticodon CAU, in an ATP-dependent manner. Cytidine is converted to lysidine, thus changing the amino acid specificity of the tRNA from methionine to isoleucine. The sequence is that of tRNA(Ile)-lysidine synthase from Lactobacillus gasseri (strain ATCC 33323 / DSM 20243 / BCRC 14619 / CIP 102991 / JCM 1131 / KCTC 3163 / NCIMB 11718 / NCTC 13722 / AM63).